The chain runs to 554 residues: CTP synthase (554 aa).

The tract at residues 1 to 265 is amidoligase domain; that stretch reads MTPLIFVTGG…DELVIDQFKL (265 aa). S13 is a CTP binding site. Position 13 (S13) interacts with UTP. Residues 14–19 and D71 contribute to the ATP site; that span reads SLGKGI. Positions 71 and 139 each coordinate Mg(2+). CTP is bound by residues 146 to 148, 186 to 191, and K222; these read DIE and KTKPTQ. UTP is bound by residues 186–191 and K222; that span reads KTKPTQ. The Glutamine amidotransferase type-1 domain maps to 292 to 545; the sequence is NIAVVGKYVD…VRAAREKKAG (254 aa). L-glutamine is bound at residue G353. C380 functions as the Nucleophile; for glutamine hydrolysis in the catalytic mechanism. Residues 381–384, E404, and R471 each bind L-glutamine; that span reads YGMQ. Residues H518 and E520 contribute to the active site.

The protein belongs to the CTP synthase family. As to quaternary structure, homotetramer.

It carries out the reaction UTP + L-glutamine + ATP + H2O = CTP + L-glutamate + ADP + phosphate + 2 H(+). The enzyme catalyses L-glutamine + H2O = L-glutamate + NH4(+). The catalysed reaction is UTP + NH4(+) + ATP = CTP + ADP + phosphate + 2 H(+). It functions in the pathway pyrimidine metabolism; CTP biosynthesis via de novo pathway; CTP from UDP: step 2/2. Allosterically activated by GTP, when glutamine is the substrate; GTP has no effect on the reaction when ammonia is the substrate. The allosteric effector GTP functions by stabilizing the protein conformation that binds the tetrahedral intermediate(s) formed during glutamine hydrolysis. Inhibited by the product CTP, via allosteric rather than competitive inhibition. In terms of biological role, catalyzes the ATP-dependent amination of UTP to CTP with either L-glutamine or ammonia as the source of nitrogen. Regulates intracellular CTP levels through interactions with the four ribonucleotide triphosphates. The polypeptide is CTP synthase (Xanthomonas axonopodis pv. citri (strain 306)).